The primary structure comprises 493 residues: Glutamate--tRNA ligase (493 aa).

Residues 10 to 20 (PSPTGDPHVGT) carry the 'HIGH' region motif. Residues C107, C109, C134, and H136 each coordinate Zn(2+). The short motif at 251 to 255 (KLSKR) is the 'KMSKS' region element. K254 contacts ATP.

It belongs to the class-I aminoacyl-tRNA synthetase family. Glutamate--tRNA ligase type 1 subfamily. Monomer. Requires Zn(2+) as cofactor.

The protein resides in the cytoplasm. The enzyme catalyses tRNA(Glu) + L-glutamate + ATP = L-glutamyl-tRNA(Glu) + AMP + diphosphate. Catalyzes the attachment of glutamate to tRNA(Glu) in a two-step reaction: glutamate is first activated by ATP to form Glu-AMP and then transferred to the acceptor end of tRNA(Glu). This Stutzerimonas stutzeri (strain A1501) (Pseudomonas stutzeri) protein is Glutamate--tRNA ligase.